A 1254-amino-acid polypeptide reads, in one-letter code: Ubiquitin carboxyl-terminal hydrolase 12 (1254 aa).

A Phosphoserine modification is found at Ser-84. Residues 97-199 form the DUSP domain; it reads NVLEQQRDVV…GSYPVVTNLV (103 aa). Positions 364–1110 constitute a USP domain; the sequence is TGLVNLGNTC…SAYLLFYIRR (747 aa). Cys-373 (nucleophile) is an active-site residue. Residues 827-893 form a disordered region; sequence DEGDTEGSEA…EPELTDKPEA (67 aa). The span at 854 to 864 shows a compositional bias: low complexity; sequence TVTNNENVNNT. A compositionally biased stretch (acidic residues) spans 867–883; that stretch reads RDEDMELTDDVEEDAST. The Proton acceptor role is filled by His-1068. Position 1160 is a phosphoserine (Ser-1160). The interval 1188–1207 is disordered; it reads QDCNDEDDNDDGERTNSGRR. Over residues 1189 to 1198 the composition is skewed to acidic residues; that stretch reads DCNDEDDNDD.

Belongs to the peptidase C19 family. Interacts with FZO1.

It carries out the reaction Thiol-dependent hydrolysis of ester, thioester, amide, peptide and isopeptide bonds formed by the C-terminal Gly of ubiquitin (a 76-residue protein attached to proteins as an intracellular targeting signal).. Ubiquitin carboxyl-terminal hydrolase that recognizes ubiquitin chains that stabilize FZO1 and promote mitochondrial fusion. UBP12 deubiquitylates FZO1 only after oligomerization. In Saccharomyces cerevisiae (strain ATCC 204508 / S288c) (Baker's yeast), this protein is Ubiquitin carboxyl-terminal hydrolase 12 (UBP12).